Reading from the N-terminus, the 190-residue chain is Protein LZIC (190 aa).

The stretch at 2–63 (ASRGKTETSK…SEFNDSLKKI (62 aa)) forms a coiled coil.

It belongs to the CTNNBIP1 family. In terms of assembly, does not interact with CTNNB1.

In Mus musculus (Mouse), this protein is Protein LZIC (Lzic).